Here is a 206-residue protein sequence, read N- to C-terminus: Proteasome subunit beta type-2 (206 aa).

It belongs to the peptidase T1B family. The 26S proteasome consists of a 20S proteasome core and two 19S regulatory subunits. The 20S proteasome core is composed of 28 subunits that are arranged in four stacked rings, resulting in a barrel-shaped structure. The two end rings are each formed by seven alpha subunits, and the two central rings are each formed by seven beta subunits. The catalytic chamber with the active sites is on the inside of the barrel.

It localises to the cytoplasm. It is found in the nucleus. Non-catalytic component of the proteasome, a multicatalytic proteinase complex which is characterized by its ability to cleave peptides with Arg, Phe, Tyr, Leu, and Glu adjacent to the leaving group at neutral or slightly basic pH. The proteasome has an ATP-dependent proteolytic activity. This is Proteasome subunit beta type-2 (PSB4) from Trypanosoma brucei brucei.